The chain runs to 618 residues: Carotenoid cleavage dioxygenase 7, chloroplastic (618 aa).

The transit peptide at 1 to 31 (MSLPIPPKFLPPLKSPPIHHHQTPPPLAPPR) directs the protein to the chloroplast. The interval 11–34 (PPLKSPPIHHHQTPPPLAPPRAAI) is disordered. Residues histidine 266, histidine 319, histidine 398, and histidine 612 each coordinate Fe cation.

The protein belongs to the carotenoid oxygenase family. Fe(2+) serves as cofactor. In terms of tissue distribution, expressed in flowers, siliques, inflorescence stems, petiole, leaves and roots.

The protein localises to the plastid. The protein resides in the chloroplast. It carries out the reaction 9-cis-beta-carotene + O2 = 9-cis-10'-apo-beta-carotenal + beta-ionone. Functionally, involved in strigolactones biosynthesis by cleaving asymmetrically a variety of linear and cyclic carotenoids at the 9-10 double bond. Produces one C(13) beta-ionone and the C(27) 10'-apo-beta-carotenal. Strigolactones are hormones that inhibit tillering and shoot branching through the MAX-dependent pathway, contribute to the regulation of shoot architectural response to phosphate-limiting conditions and function as rhizosphere signal that stimulates hyphal branching of arbuscular mycorrhizal fungi and trigger seed germination of root parasitic weeds. No activity on lycopene, lutein, zeaxanthin, violaxanthin or neoxanthin. Probably not involved in abscisic acid biosynthesis. This Arabidopsis thaliana (Mouse-ear cress) protein is Carotenoid cleavage dioxygenase 7, chloroplastic (CCD7).